A 106-amino-acid chain; its full sequence is DNA-directed RNA polymerase subunit omega (106 aa).

The disordered stretch occupies residues 76–106 (REPAREAAEPAGEAPEEQQRAAGEREDQGAA). A compositionally biased stretch (basic and acidic residues) spans 92–106 (EQQRAAGEREDQGAA).

Belongs to the RNA polymerase subunit omega family. The RNAP catalytic core consists of 2 alpha, 1 beta, 1 beta' and 1 omega subunit. When a sigma factor is associated with the core the holoenzyme is formed, which can initiate transcription.

The enzyme catalyses RNA(n) + a ribonucleoside 5'-triphosphate = RNA(n+1) + diphosphate. Functionally, promotes RNA polymerase assembly. Latches the N- and C-terminal regions of the beta' subunit thereby facilitating its interaction with the beta and alpha subunits. This is DNA-directed RNA polymerase subunit omega from Rubrobacter xylanophilus (strain DSM 9941 / JCM 11954 / NBRC 16129 / PRD-1).